We begin with the raw amino-acid sequence, 563 residues long: Inorganic phosphate transporter PT2 (563 aa).

2 disordered regions span residues 1–51 (MAPR…SGEE) and 67–96 (DGGA…PAYS). Residues 1–127 (MAPRYHSAAE…NGEKQSLLVP (127 aa)) lie on the Extracellular side of the membrane. A helical transmembrane segment spans residues 128 to 148 (CLAVFSSNYNFTVTSIALFLM). The Cytoplasmic portion of the chain corresponds to 149–168 (NQDPLYKDASDTVVGSSTVK). A helical transmembrane segment spans residues 169-189 (MLSYAGAIVGMCTMGYLGDLI). Topologically, residues 190–192 (GRR) are extracellular. Residues 193 to 213 (LAMILTLALVFIGALLSSICA) traverse the membrane as a helical segment. The Cytoplasmic segment spans residues 214–217 (WGDG). The helical transmembrane segment at 218-238 (VTVLVIMGVCRFVLGVGSGGV) threads the bilayer. The Extracellular portion of the chain corresponds to 239–263 (YPLSAVSAAEGAGSEKSNDRSMRVS). The helical transmembrane segment at 264-284 (WAYSMNVPGIMFPYIVALVLW) threads the bilayer. Topologically, residues 285 to 291 (CTTHNVD) are cytoplasmic. A helical membrane pass occupies residues 292 to 312 (VCFRILLGFGALPALLIWLPA). The Extracellular portion of the chain corresponds to 313-342 (WRMKEDRAYVAKDFAKHLAGVFVSRSYWRQ). The chain crosses the membrane as a helical span at residues 343 to 363 (LLGTGVCWLLYDVTAYGILLV). At 364 to 380 (QPEITQSIWGNSSSVTD) the chain is on the cytoplasmic side. Residues 381–401 (VIWQNIILNGMGIPGCFMGIL) traverse the membrane as a helical segment. Topologically, residues 402–412 (VLKQMGVKWLQ) are extracellular. The helical transmembrane segment at 413–433 (FWGFVGLAVSAFLMAATVEIL) threads the bilayer. Over 434-440 (QGKAWAQ) the chain is Cytoplasmic. The helical transmembrane segment at 441 to 461 (LVLLCIVNFFINWGASITTFI) threads the bilayer. Residues 462–477 (LPSLVFPPEVRSTYSG) lie on the Extracellular side of the membrane. The helical transmembrane segment at 478 to 498 (ISAALGKIGAVGGIYTMKAIL) threads the bilayer. Residues 499-504 (STGGLT) lie on the Cytoplasmic side of the membrane. Residues 505–525 (PMMICAGVPSLAAAILTWFYV) form a helical membrane-spanning segment. At 526–563 (DPVPNTLRSSFLQCFGSLAGSCPFIDCRKFRRGSRAFE) the chain is on the extracellular side.

This sequence belongs to the major facilitator superfamily. Phosphate:H(+) symporter (TC 2.A.1.9) family.

It is found in the cell membrane. The catalysed reaction is phosphate(in) = phosphate(out). Functionally, inorganic phosphate transporter. Activity is likely sodium-independent. Exhibits higher activity under acidic pH, implying that either the monovalent form of phosphate is the preferred substrate or the transport activity is H(+)-dependent. The protein is Inorganic phosphate transporter PT2 of Toxoplasma gondii (strain ATCC 50861 / VEG).